We begin with the raw amino-acid sequence, 453 residues long: Ribosome biogenesis protein YTM1 (453 aa).

The ubiquitin-like (UBL) domain stretch occupies residues 8-89 (VKLRFFTREQ…ETFLNVEYTR (82 aa)). The sufficient for interaction with ERB1 and association with 66S pre-ribosomes stretch occupies residues 99-453 (SFSNEDWVSS…INKGDNIFKS (355 aa)). WD repeat units lie at residues 101 to 139 (SNEDWVSSLDVGDNNKIISGSYDGVVRTWNLSGKIEKQY), 141 to 179 (GHSAPIRAVKYISNTRMVSGGNDRTLRLWKTKNEDLKQP), 199 to 237 (GHKAPVVSIDVSDNSRILSGSYDNTIGFWSTIYKEMTVV), 278 to 318 (SHTG…CIDT), 320 to 359 (TTSYSLLSLAQLPTLNLLACGSSARHITLHDPRIGSTSKI), 366 to 406 (GHKN…PMYT), and 417 to 453 (GVNDKVFAVNWSKNVGIISAGQDKKIQINKGDNIFKS).

Belongs to the WD repeat WDR12/YTM1 family. Component of the NOP7 complex, composed of ERB1, NOP7 and YTM1. The complex is held together by ERB1, which interacts with NOP7 via its N-terminal domain and with YTM1 via a high-affinity interaction between the seven-bladed beta-propeller domains of the 2 proteins. The NOP7 complex associates with the 66S pre-ribosome. Interacts (via UBL domain) with MDN1 (via VWFA/MIDAS domain).

It is found in the nucleus. The protein resides in the nucleolus. It localises to the nucleoplasm. In terms of biological role, component of the NOP7 complex, which is required for maturation of the 25S and 5.8S ribosomal RNAs and formation of the 60S ribosome. This Vanderwaltozyma polyspora (strain ATCC 22028 / DSM 70294 / BCRC 21397 / CBS 2163 / NBRC 10782 / NRRL Y-8283 / UCD 57-17) (Kluyveromyces polysporus) protein is Ribosome biogenesis protein YTM1.